The following is a 599-amino-acid chain: MFS-type transporter ucsM (599 aa).

Over residues 23–34 (AHHHGKEREAHR) the composition is skewed to basic and acidic residues. The disordered stretch occupies residues 23–42 (AHHHGKEREAHRQSLSSVPG). 8 helical membrane-spanning segments follow: residues 147-167 (VALG…GAWL), 178-198 (ILIG…GAVP), 204-224 (GKGT…AGLF), 263-283 (IMLI…ATVY), 291-311 (WLAF…LWYL), 386-406 (IFLY…ILPS), 424-444 (FNPI…YPAL), and 454-474 (ISRI…SSLV). Residue asparagine 517 is glycosylated (N-linked (GlcNAc...) asparagine). The next 2 helical transmembrane spans lie at 539-559 (LFLF…PAIV) and 563-583 (LVWV…IFWV).

This sequence belongs to the major facilitator superfamily. Proton-dependent oligopeptide transporter (POT/PTR) (TC 2.A.17) family.

Its subcellular location is the membrane. In terms of biological role, MFS-type transporter; part of the gene cluster that mediates the biosynthesis of UCS1025A, a member of the pyrrolizidinone family that acts as a strong telomerase inhibitor and displays potent antibacterial and antitumor properties. These compounds share a hemiaminal-containing pyrrolizidinone core fused with a gamma-lactone, giving a furopyrrolizidine that is connected to a decalin fragment. This is MFS-type transporter ucsM from Acremonium sp.